Here is a 550-residue protein sequence, read N- to C-terminus: Arginine--tRNA ligase (550 aa).

The 'HIGH' region signature appears at 130-140; it reads ANPTGPIHLGG.

This sequence belongs to the class-I aminoacyl-tRNA synthetase family. As to quaternary structure, monomer.

It localises to the cytoplasm. It catalyses the reaction tRNA(Arg) + L-arginine + ATP = L-arginyl-tRNA(Arg) + AMP + diphosphate. The polypeptide is Arginine--tRNA ligase (Corynebacterium glutamicum (strain R)).